Here is a 740-residue protein sequence, read N- to C-terminus: MQPPPRKVKVTQELKNIQVEQMTKLQAKHQAECDLLEDMRTFSQKKAAIEREYAQGMQKLASQYLKRDWPGVKADDRNDYRSMYPVWKSFLEGTMQVAQSRMNICENYKNFISEPARTVRSLKEQQLKRCVDQLTKIQTELQETVKDLAKGKKKYFETEQMAHAVREKADIEAKSKLSLFQSRISLQKASVKLKARRSECNSKATHARNDYLLTLAAANAHQDRYYQTDLVNIMKALDGNVYDHLKDYLIAFSRTELETCQAVQNTFQFLLENSSKVVRDYNLQLFLQENAVFHKPQPFQFQPCDSDTSRQLESETGTTEEHSLNKEARKWATRVAREHKNIVHQQRVLNDLECHGAAVSEQSRAELEQKIDEARENIRKAEIIKLKAEARLDLLKQIGVSVDTWLKSAMNQVMEELENERWARPPAVTSNGTLHSLNADTEREEGEEFEDNMDVFDDSSSSPSGTLRNYPLTCKVVYSYKASQPDELTIEEHEVLEVIEDGDMEDWVKARNKVGQVGYVPEKYLQFPTSNSLLSMLQSLAALDSRSHTSSNSTEAELVSGSLNGDASVCFVKALYDYEGQTDDELSFPEGAIIRILNKENQDDDGFWEGEFNGRIGVFPSVLVEELSASENGDTPWMREIQISPSPKPHASLPPLPLYDQPPSSPYPSPDKRSSLYFPRSPSANEKSLHAESPGFSQASRHTPETSYGKLRPVRAAPPPPTQNHRRPAEKIEDVEITLV.

The region spanning 8 to 282 is the F-BAR domain; that stretch reads VKVTQELKNI…NSSKVVRDYN (275 aa). The interval 303–323 is disordered; it reads PCDSDTSRQLESETGTTEEHS. Over residues 307 to 323 the composition is skewed to basic and acidic residues; it reads DTSRQLESETGTTEEHS. Residues 356–397 are a coiled coil; it reads GAAVSEQSRAELEQKIDEARENIRKAEIIKLKAEARLDLLKQ. SH3 domains lie at 469-530 and 567-629; these read NYPL…FPTS and ASVC…ELSA. The tract at residues 567 to 629 is required and sufficient for location at clathrin-coated pits; it reads ASVCFVKALY…PSVLVEELSA (63 aa). The segment at 633 to 740 is disordered; the sequence is GDTPWMREIQ…KIEDVEITLV (108 aa). Residues 646-657 show a composition bias toward pro residues; sequence SPKPHASLPPLP. Phosphoserine occurs at positions 675 and 681.

As to quaternary structure, homodimer. Interacts (via SH3 domain 2) with ITSN1 (via SH3 domain 4). Recruited to clathrin-coated pits during a mid-to-late stage of assembly via interaction with ITSN1. Interacts (via SH3 domain 1) with WASL. Interacts with WAS. Interacts with CASK and MAGI1. CASK inhibits interaction with MAGI1. Post-translationally, phosphorylated. Phosphorylation on a Ser residue is important for recruitment to the cell membrane and for its role in promoting endocytosis. As to expression, liver, brain, heart, placenta, skeletal muscle, pancreas, lung and kidney.

The protein resides in the cytoplasm. It is found in the cell junction. The protein localises to the membrane. It localises to the clathrin-coated pit. Its subcellular location is the cell membrane. The protein resides in the cell projection. It is found in the stereocilium. Functionally, adapter protein that plays a role in endocytosis via clathrin-coated pits. Contributes to the internalization of cell surface receptors, such as integrin ITGB1 and transferrin receptor. Promotes endocytosis of EGFR in cancer cells, and thereby contributes to the down-regulation of EGFR signaling. Recruited to clathrin-coated pits during a mid-to-late stage of assembly, where it is required for normal progress from U-shaped intermediate stage pits to terminal, omega-shaped pits. Binds to membranes enriched in phosphatidylinositol 3,4-bisphosphate or phosphatidylinositol 3,4,5-trisphosphate. When bound to membranes, promotes actin polymerization via its interaction with WAS and/or WASL which leads to the activation of the Arp2/3 complex. Does not promote actin polymerisation in the absence of membranes. This chain is F-BAR and double SH3 domains protein 2 (FCHSD2), found in Homo sapiens (Human).